The chain runs to 770 residues: MTYTINADQVHQIVHNLHHDPFEVLGCHPLGDHGKVNQWVIRAYLPTAEAVTVLLPTDRREVIMTTVHHPNFFECVLELEEPKNYQLRITENGHERVIYDPYGFKTPKLTDFDLHVFGEGNHHRIYEKLGAHLMTVDGVKGVYFAVWAPNARNVSILGDFNNWDGRLHQMRKRNNMVWELFIPELGVGTSYKYEIKNWEGHIYEKTDPYGFYQEVRPKTASIVADLDGYQWHDEDWLEARRTSDPLSKPVSVYELHLGSWLHTAYDEPVKTLHGEGVPVEVSEWNTGARFLTYYELVDKLIPYVKELGYTHIELLPIAEHPFDGSWGYQVTGYYAPTSRFGSPEDFMYFVDQCHLNGIGVIIDWVPGHFPKDGHGLAFFDGTHLYEHGDPRKGEHKEWGTLIFNYGRNEVRNFLVANALFWFDKYHIDGMRVDAVASMLYLDYCREEGEWVANEYGGRENLEAADFLRQVNSVVYSYFPGILSIAEESTSWPMVSWPTYVGGLGFNLKWNMGWMHDMLDYFSMDPWFRQFHQNSITFSMWYNHSENYMLALSHDEVVHGKSNMLGKMPGDEWQKYANVRALFTYMFTHPGKKTMFMSMEFGQWSEWNVWGDLEWHLLNFPPHQQLKQFFTELNHLYKNEPALYSNDFDESGFQWIDCSDNRHSVVSFIRRAKNSAEFVVTICNFTPQPHSHYRVGVPVPGFYTELFNSDARQYGGSNMGNLGGKWTEEWSFHEQPYSLDLCLPPLSVLVLKLSQNAEENTVPAEEASNIA.

The Nucleophile role is filled by aspartate 433. Glutamate 486 (proton donor) is an active-site residue.

This sequence belongs to the glycosyl hydrolase 13 family. GlgB subfamily. In terms of assembly, monomer.

The catalysed reaction is Transfers a segment of a (1-&gt;4)-alpha-D-glucan chain to a primary hydroxy group in a similar glucan chain.. It functions in the pathway glycan biosynthesis; glycogen biosynthesis. Catalyzes the formation of the alpha-1,6-glucosidic linkages in glycogen by scission of a 1,4-alpha-linked oligosaccharide from growing alpha-1,4-glucan chains and the subsequent attachment of the oligosaccharide to the alpha-1,6 position. In Synechocystis sp. (strain ATCC 27184 / PCC 6803 / Kazusa), this protein is 1,4-alpha-glucan branching enzyme GlgB (glgB).